A 534-amino-acid polypeptide reads, in one-letter code: CTP synthase (534 aa).

Positions 1–265 (MKYIVVTGGV…TTQLMKHLRL (265 aa)) are amidoligase domain. CTP is bound at residue S12. S12 lines the UTP pocket. 13-18 (GLGKGI) contributes to the ATP binding site. Y53 lines the L-glutamine pocket. Residue D70 participates in ATP binding. The Mg(2+) site is built by D70 and E140. CTP is bound by residues 147–149 (DIE), 186–191 (KTKPTQ), and K222. UTP is bound by residues 186–191 (KTKPTQ) and K222. The region spanning 289–530 (KLAIVGKYTN…VRAMCKYRKE (242 aa)) is the Glutamine amidotransferase type-1 domain. L-glutamine is bound at residue G352. Residue C379 is the Nucleophile; for glutamine hydrolysis of the active site. L-glutamine is bound by residues 380–383 (LGMQ), E403, and R460. Residues H503 and E505 contribute to the active site.

It belongs to the CTP synthase family. As to quaternary structure, homotetramer.

It catalyses the reaction UTP + L-glutamine + ATP + H2O = CTP + L-glutamate + ADP + phosphate + 2 H(+). The enzyme catalyses L-glutamine + H2O = L-glutamate + NH4(+). It carries out the reaction UTP + NH4(+) + ATP = CTP + ADP + phosphate + 2 H(+). The protein operates within pyrimidine metabolism; CTP biosynthesis via de novo pathway; CTP from UDP: step 2/2. Its activity is regulated as follows. Allosterically activated by GTP, when glutamine is the substrate; GTP has no effect on the reaction when ammonia is the substrate. The allosteric effector GTP functions by stabilizing the protein conformation that binds the tetrahedral intermediate(s) formed during glutamine hydrolysis. Inhibited by the product CTP, via allosteric rather than competitive inhibition. Catalyzes the ATP-dependent amination of UTP to CTP with either L-glutamine or ammonia as the source of nitrogen. Regulates intracellular CTP levels through interactions with the four ribonucleotide triphosphates. The protein is CTP synthase of Methanosarcina mazei (strain ATCC BAA-159 / DSM 3647 / Goe1 / Go1 / JCM 11833 / OCM 88) (Methanosarcina frisia).